Consider the following 464-residue polypeptide: Siroheme synthase (464 aa).

Residues 1 to 203 are precorrin-2 dehydrogenase /sirohydrochlorin ferrochelatase; it reads MDYLPLFHKL…GQGAEAERLL (203 aa). NAD(+) is bound by residues 22-23 and 43-44; these read EI and PE. S128 bears the Phosphoserine mark. Residues 216–464 are uroporphyrinogen-III C-methyltransferase; the sequence is GEVYLVGAGP…AWFEGSQQDQ (249 aa). P225 is a binding site for S-adenosyl-L-methionine. D248 serves as the catalytic Proton acceptor. The active-site Proton donor is K270. S-adenosyl-L-methionine is bound by residues 301 to 303, I306, 331 to 332, M383, and G412; these read GGD and TA.

The protein in the N-terminal section; belongs to the precorrin-2 dehydrogenase / sirohydrochlorin ferrochelatase family. It in the C-terminal section; belongs to the precorrin methyltransferase family.

It carries out the reaction uroporphyrinogen III + 2 S-adenosyl-L-methionine = precorrin-2 + 2 S-adenosyl-L-homocysteine + H(+). The enzyme catalyses precorrin-2 + NAD(+) = sirohydrochlorin + NADH + 2 H(+). The catalysed reaction is siroheme + 2 H(+) = sirohydrochlorin + Fe(2+). Its pathway is cofactor biosynthesis; adenosylcobalamin biosynthesis; precorrin-2 from uroporphyrinogen III: step 1/1. It functions in the pathway cofactor biosynthesis; adenosylcobalamin biosynthesis; sirohydrochlorin from precorrin-2: step 1/1. The protein operates within porphyrin-containing compound metabolism; siroheme biosynthesis; precorrin-2 from uroporphyrinogen III: step 1/1. It participates in porphyrin-containing compound metabolism; siroheme biosynthesis; siroheme from sirohydrochlorin: step 1/1. Its pathway is porphyrin-containing compound metabolism; siroheme biosynthesis; sirohydrochlorin from precorrin-2: step 1/1. In terms of biological role, multifunctional enzyme that catalyzes the SAM-dependent methylations of uroporphyrinogen III at position C-2 and C-7 to form precorrin-2 via precorrin-1. Then it catalyzes the NAD-dependent ring dehydrogenation of precorrin-2 to yield sirohydrochlorin. Finally, it catalyzes the ferrochelation of sirohydrochlorin to yield siroheme. The polypeptide is Siroheme synthase (Pseudomonas putida (strain W619)).